We begin with the raw amino-acid sequence, 181 residues long: Protein GrpE (181 aa).

It belongs to the GrpE family. In terms of assembly, homodimer.

The protein resides in the cytoplasm. Participates actively in the response to hyperosmotic and heat shock by preventing the aggregation of stress-denatured proteins, in association with DnaK and GrpE. It is the nucleotide exchange factor for DnaK and may function as a thermosensor. Unfolded proteins bind initially to DnaJ; upon interaction with the DnaJ-bound protein, DnaK hydrolyzes its bound ATP, resulting in the formation of a stable complex. GrpE releases ADP from DnaK; ATP binding to DnaK triggers the release of the substrate protein, thus completing the reaction cycle. Several rounds of ATP-dependent interactions between DnaJ, DnaK and GrpE are required for fully efficient folding. This is Protein GrpE from Leptothrix cholodnii (strain ATCC 51168 / LMG 8142 / SP-6) (Leptothrix discophora (strain SP-6)).